We begin with the raw amino-acid sequence, 158 residues long: Lipoprotein signal peptidase (158 aa).

3 consecutive transmembrane segments (helical) span residues 12-32, 46-66, and 71-91; these read LFWWVAGLALASDRLTKAWIV, IIPGVFHITYVTNTGAAFSLF, and IWLRWLSLIVSLGLITWAILG. Catalysis depends on residues D124 and D140. The helical transmembrane segment at 135–155 threads the bilayer; the sequence is VFNVADIAINIGIVCLLWSAW.

Belongs to the peptidase A8 family.

The protein localises to the cell inner membrane. The enzyme catalyses Release of signal peptides from bacterial membrane prolipoproteins. Hydrolyzes -Xaa-Yaa-Zaa-|-(S,diacylglyceryl)Cys-, in which Xaa is hydrophobic (preferably Leu), and Yaa (Ala or Ser) and Zaa (Gly or Ala) have small, neutral side chains.. Its pathway is protein modification; lipoprotein biosynthesis (signal peptide cleavage). This protein specifically catalyzes the removal of signal peptides from prolipoproteins. This chain is Lipoprotein signal peptidase, found in Thermosynechococcus vestitus (strain NIES-2133 / IAM M-273 / BP-1).